A 609-amino-acid chain; its full sequence is Threonine--tRNA ligase (609 aa).

Residues 215–506 are catalytic; the sequence is DHRIIGNEMK…LIEHTAGELP (292 aa). Residues Cys307, His358, and His483 each coordinate Zn(2+).

The protein belongs to the class-II aminoacyl-tRNA synthetase family. In terms of assembly, homodimer. Requires Zn(2+) as cofactor.

Its subcellular location is the cytoplasm. The catalysed reaction is tRNA(Thr) + L-threonine + ATP = L-threonyl-tRNA(Thr) + AMP + diphosphate + H(+). Catalyzes the attachment of threonine to tRNA(Thr) in a two-step reaction: L-threonine is first activated by ATP to form Thr-AMP and then transferred to the acceptor end of tRNA(Thr). Also edits incorrectly charged L-seryl-tRNA(Thr). The sequence is that of Threonine--tRNA ligase from Campylobacter hominis (strain ATCC BAA-381 / DSM 21671 / CCUG 45161 / LMG 19568 / NCTC 13146 / CH001A).